The primary structure comprises 691 residues: MLCVLAGAAYGVFRTEAALSSQWRAEAVSGVPLTVEVTDMPRSDGRRVQFAAKAVDSGGRTFDLLLSDYKRREWAVGSRWRITARVHPVVGELNLRGLNREAWALSNGVGGVGTVGADRVLLHGGSGWGIAVWRSRISRNWRQADADGGLSDGIGLMRALSVGEQSALRPGLWQAFRPLGLTHLVSISGLHVTMVAVLFAWLAKRLLACSPRLPARPRAWVLAAGCAGALFYALLAGFSVPTQRSVLMLAAFAWAWRRGRLSAWATWWQALAAVLLFDPLAVLGVGTWLSFGLVAALIWACAGRLYEGKRQTAVRGQWAASVLSLVLLGYLFASLPLVSPLVNAVSIPWFSWVLTPLALLGSVVPFAPLQQAGAFLAEYTLRFLVWLADVSPEFAVAAAPLPLLVLAVCAALLLLLPRGLGLRPWAVLLLAGFVSYRPEAVPENEAAVTVWDAGQGLSVLVRTANRHLLFDTGTVAAAQTGIVPSLNAAGVRRLDKLVLSHHDSDHDGGFQAVGKIPNGGIYAGQPEFYEGARHCAEQRWQWDGVDFEFLRPSERKNIDDNGKSCVLRVVAGGAALLVTGDLDTKGEESLVGKYGGNLYSQVLVLGHHGSNTSSSGVFLNAVSPEYAVASSGYANAYKHPTEAVQNRVRAHGIKLLRTDLSGALQFGLGRGGVKAQRLRVYKFYWQKKPFE.

The next 6 helical transmembrane spans lie at 183–203 (HLVSISGLHVTMVAVLFAWLA), 220–240 (WVLAAGCAGALFYALLAGFSV), 280–300 (LAVLGVGTWLSFGLVAALIWA), 322–342 (VLSLVLLGYLFASLPLVSPLV), 347–367 (IPWFSWVLTPLALLGSVVPFA), and 396–416 (VAAAPLPLLVLAVCAALLLLL).

This sequence to B.subtilis ComEC, H.influenzae REC2, and E.coli YcaI.

The protein resides in the cell inner membrane. Essential for natural transformation. Could be a transporter involved in DNA uptake. The protein is Competence protein ComA (comA) of Neisseria gonorrhoeae.